The sequence spans 226 residues: PDGF-related-transforming protein sis (226 aa).

Residues 201–215 are compositionally biased toward basic residues; that stretch reads RRPPKGKHRKCKHTH. The segment at 201–226 is disordered; it reads RRPPKGKHRKCKHTHDKTALKETLGA.

The protein belongs to the PDGF/VEGF growth factor family.

In Woolly monkey sarcoma virus (WMSV), this protein is PDGF-related-transforming protein sis (V-SIS).